Reading from the N-terminus, the 330-residue chain is tRNA U34 carboxymethyltransferase (330 aa).

Residues K91, W105, K110, G130, 152-154 (DPS), 181-182 (IE), M196, Y200, and R315 each bind carboxy-S-adenosyl-L-methionine.

This sequence belongs to the class I-like SAM-binding methyltransferase superfamily. CmoB family. In terms of assembly, homotetramer.

It carries out the reaction carboxy-S-adenosyl-L-methionine + 5-hydroxyuridine(34) in tRNA = 5-carboxymethoxyuridine(34) in tRNA + S-adenosyl-L-homocysteine + H(+). Its function is as follows. Catalyzes carboxymethyl transfer from carboxy-S-adenosyl-L-methionine (Cx-SAM) to 5-hydroxyuridine (ho5U) to form 5-carboxymethoxyuridine (cmo5U) at position 34 in tRNAs. In Shewanella halifaxensis (strain HAW-EB4), this protein is tRNA U34 carboxymethyltransferase.